The sequence spans 1456 residues: Putative 1-phosphatidylinositol-3-phosphate 5-kinase FAB1D (1456 aa).

The span at methionine 1–serine 19 shows a compositional bias: low complexity. Disordered regions lie at residues methionine 1–glycine 110, proline 533–glutamate 592, glutamate 925–valine 944, valine 967–isoleucine 987, asparagine 1003–valine 1022, and asparagine 1137–leucine 1159. Basic and acidic residues predominate over residues glutamate 43–serine 57. A compositionally biased stretch (acidic residues) spans arginine 86–glycine 110. Residues proline 533–serine 544 are compositionally biased toward low complexity. The segment covering serine 973–isoleucine 987 has biased composition (polar residues). The PIPK domain maps to asparagine 1115–phenylalanine 1443. Residues arginine 1150–leucine 1159 are compositionally biased toward polar residues.

As to quaternary structure, component of the PI(3,5)P2 regulatory complex at least composed of ATG18, SAC/FIG4, FAB1 and VAC14. Mg(2+) serves as cofactor. The cofactor is Mn(2+).

It catalyses the reaction a 1,2-diacyl-sn-glycero-3-phospho-(1D-myo-inositol-3-phosphate) + ATP = a 1,2-diacyl-sn-glycero-3-phospho-(1D-myo-inositol-3,5-bisphosphate) + ADP + H(+). Functionally, the PI(3,5)P2 regulatory complex regulates both the synthesis and turnover of phosphatidylinositol 3,5-bisphosphate (PtdIns(3,5)P2). Catalyzes the phosphorylation of phosphatidylinositol 3-phosphate on the fifth hydroxyl of the myo-inositol ring, to form phosphatidylinositol 3,5-bisphosphate. This Arabidopsis thaliana (Mouse-ear cress) protein is Putative 1-phosphatidylinositol-3-phosphate 5-kinase FAB1D (FAB1D).